The following is a 217-amino-acid chain: ATP-dependent Clp protease proteolytic subunit (217 aa).

Ser-121 acts as the Nucleophile in catalysis. His-146 is a catalytic residue.

It belongs to the peptidase S14 family. In terms of assembly, fourteen ClpP subunits assemble into 2 heptameric rings which stack back to back to give a disk-like structure with a central cavity, resembling the structure of eukaryotic proteasomes.

It is found in the cytoplasm. It catalyses the reaction Hydrolysis of proteins to small peptides in the presence of ATP and magnesium. alpha-casein is the usual test substrate. In the absence of ATP, only oligopeptides shorter than five residues are hydrolyzed (such as succinyl-Leu-Tyr-|-NHMec, and Leu-Tyr-Leu-|-Tyr-Trp, in which cleavage of the -Tyr-|-Leu- and -Tyr-|-Trp bonds also occurs).. Cleaves peptides in various proteins in a process that requires ATP hydrolysis. Has a chymotrypsin-like activity. Plays a major role in the degradation of misfolded proteins. The polypeptide is ATP-dependent Clp protease proteolytic subunit (Burkholderia lata (strain ATCC 17760 / DSM 23089 / LMG 22485 / NCIMB 9086 / R18194 / 383)).